Reading from the N-terminus, the 513-residue chain is Pantetheinase (513 aa).

Residues Met1–Cys21 form the signal peptide. An N-linked (GlcNAc...) asparagine glycan is attached at Asn38. The 268-residue stretch at Ala39–Ser306 folds into the CN hydrolase domain. Glu79 acts as the Proton acceptor in catalysis. Asn130 is a glycosylation site (N-linked (GlcNAc...) asparagine). The active-site Proton donor is Lys178. A glycan (N-linked (GlcNAc...) asparagine) is linked at Asn200. The Nucleophile role is filled by Cys211. 3 N-linked (GlcNAc...) asparagine glycosylation sites follow: Asn283, Asn315, and Asn353. Gly491 carries GPI-anchor amidated glycine lipidation. A propeptide spans Leu492–Trp513 (removed in mature form).

The protein belongs to the carbon-nitrogen hydrolase superfamily. BTD/VNN family. In terms of assembly, monomer. In terms of tissue distribution, widely expressed with higher expression in spleen, kidney and blood. Overexpressed in lesional psoriatic skin.

Its subcellular location is the cell membrane. It catalyses the reaction (R)-pantetheine + H2O = cysteamine + (R)-pantothenate. Its function is as follows. Amidohydrolase that hydrolyzes specifically one of the carboamide linkages in D-pantetheine thus recycling pantothenic acid (vitamin B5) and releasing cysteamine. The chain is Pantetheinase (VNN1) from Homo sapiens (Human).